The primary structure comprises 338 residues: Putative peptide import ATP-binding protein BMEII0863 (338 aa).

Positions 10–263 constitute an ABC transporter domain; that stretch reads KGLRTVFRTR…PRHPYTMGLL (254 aa). 43-50 contributes to the ATP binding site; sequence GESGSGKS.

This sequence belongs to the ABC transporter superfamily. In terms of assembly, the complex is composed of two ATP-binding proteins (BMEII0863 and BMEII0864), two transmembrane proteins (BMEII0860 and BMEII0861) and a solute-binding protein (BMEII0859).

The protein localises to the cell inner membrane. Probably part of an ABC transporter complex that could be involved in peptide import. Probably responsible for energy coupling to the transport system. This is Putative peptide import ATP-binding protein BMEII0863 from Brucella melitensis biotype 1 (strain ATCC 23456 / CCUG 17765 / NCTC 10094 / 16M).